The following is a 149-amino-acid chain: Urease accessory protein UreE (149 aa).

The protein belongs to the UreE family.

It is found in the cytoplasm. Functionally, involved in urease metallocenter assembly. Binds nickel. Probably functions as a nickel donor during metallocenter assembly. The sequence is that of Urease accessory protein UreE from Prochlorococcus marinus (strain AS9601).